Consider the following 488-residue polypeptide: Bifunctional protein HldE (488 aa).

Residues 1–327 (MDDTLAKLPR…GLAHGEHADP (327 aa)) are ribokinase. 201-204 (NRRE) contributes to the ATP binding site. Asp272 is an active-site residue. The segment at 354 to 488 (FTNGCFDLLH…GRMNAPAVGG (135 aa)) is cytidylyltransferase.

The protein in the N-terminal section; belongs to the carbohydrate kinase PfkB family. It in the C-terminal section; belongs to the cytidylyltransferase family. As to quaternary structure, homodimer.

The catalysed reaction is D-glycero-beta-D-manno-heptose 7-phosphate + ATP = D-glycero-beta-D-manno-heptose 1,7-bisphosphate + ADP + H(+). The enzyme catalyses D-glycero-beta-D-manno-heptose 1-phosphate + ATP + H(+) = ADP-D-glycero-beta-D-manno-heptose + diphosphate. Its pathway is nucleotide-sugar biosynthesis; ADP-L-glycero-beta-D-manno-heptose biosynthesis; ADP-L-glycero-beta-D-manno-heptose from D-glycero-beta-D-manno-heptose 7-phosphate: step 1/4. The protein operates within nucleotide-sugar biosynthesis; ADP-L-glycero-beta-D-manno-heptose biosynthesis; ADP-L-glycero-beta-D-manno-heptose from D-glycero-beta-D-manno-heptose 7-phosphate: step 3/4. In terms of biological role, catalyzes the phosphorylation of D-glycero-D-manno-heptose 7-phosphate at the C-1 position to selectively form D-glycero-beta-D-manno-heptose-1,7-bisphosphate. Catalyzes the ADP transfer from ATP to D-glycero-beta-D-manno-heptose 1-phosphate, yielding ADP-D-glycero-beta-D-manno-heptose. The chain is Bifunctional protein HldE from Caulobacter sp. (strain K31).